A 569-amino-acid chain; its full sequence is Formate--tetrahydrofolate ligase (569 aa).

64–71 (TPHGEGKT) contacts ATP.

This sequence belongs to the formate--tetrahydrofolate ligase family.

The catalysed reaction is (6S)-5,6,7,8-tetrahydrofolate + formate + ATP = (6R)-10-formyltetrahydrofolate + ADP + phosphate. It functions in the pathway one-carbon metabolism; tetrahydrofolate interconversion. The sequence is that of Formate--tetrahydrofolate ligase from Shewanella sp. (strain MR-7).